Consider the following 391-residue polypeptide: Outer membrane protein 41 (391 aa).

Residues 1–20 form the signal peptide; it reads MKVKYLMLTLVGAIALNASA. Gln21 is subject to Pyrrolidone carboxylic acid. The region spanning 282–391 is the OmpA-like domain; it reads TKTENILTEK…WNRVVIVRSK (110 aa).

Belongs to the outer membrane OOP (TC 1.B.6) superfamily. As to quaternary structure, disulfide-linked heterodimer with Omp40.

The protein localises to the cell outer membrane. Functionally, may have porin activity and function in peptidoglycan binding. The sequence is that of Outer membrane protein 41 from Porphyromonas gingivalis (strain ATCC BAA-308 / W83).